A 308-amino-acid polypeptide reads, in one-letter code: MSAQKPGLHPRNRHHSRYDLATLCQVNPELRQFLTLTPAGEQSVDFANPLAVKALNKALLAHFYAVANWDIPDGFLCPPVPGRADYIHHLADLLAEASGTIPANASILDIGVGANCIYPLIGVHEYGWRFTGSETSSQALSSAQAIISANPGLNRAIRLRRQKESGAIFNGIIHKNEQYDATLCNPPFHDSAAAARAGSERKRRNLGLNKDDALNFGGQQQELWCEGGEVNFIKKMIEESKGFAKQVMWFTSLVSRGENLPPLYRALTDVGAVKVVKKEMAQGQKQSRFIAWTFMNDEQRRRFVNRQR.

This sequence belongs to the methyltransferase superfamily. METTL16/RlmF family.

It is found in the cytoplasm. It catalyses the reaction adenosine(1618) in 23S rRNA + S-adenosyl-L-methionine = N(6)-methyladenosine(1618) in 23S rRNA + S-adenosyl-L-homocysteine + H(+). Specifically methylates the adenine in position 1618 of 23S rRNA. The polypeptide is Ribosomal RNA large subunit methyltransferase F (Shigella flexneri serotype 5b (strain 8401)).